The primary structure comprises 432 residues: 7-dehydrocholesterol reductase (432 aa).

9 consecutive transmembrane segments (helical) span residues 12–34 (YASMLSLLAFCPPFVILLWYTMV), 64–86 (LIAWKIIFCYGAFEAILQLLLPG), 107–126 (LAAYFVTLATYLGLWWFGIF), 136–155 (GEIFSALIFGSFIFCVLLYI), 195–212 (FTNCRFGMMSWAVLAVTY), 227–249 (MLVNTILMLVYVTKFFWWEAGYW), 261–283 (FYICWGCLVWVPSVYTSPGMYLV), 287–309 (VELGTQLAIYILVAGILCIYINY), and 371–393 (SAFFWTVPALFDNFLAYFYVIFL).

It belongs to the ERG4/ERG24 family.

Its subcellular location is the endoplasmic reticulum membrane. The catalysed reaction is cholesterol + NADP(+) = 7-dehydrocholesterol + NADPH + H(+). It participates in lipid metabolism; steroid biosynthesis. Production of cholesterol by reduction of C7-C8 double bond of 7-dehydrocholesterol (7-DHC). Lesions in the gene coding for the enzyme cause dwarfism. This chain is 7-dehydrocholesterol reductase (DWF5), found in Arabidopsis thaliana (Mouse-ear cress).